The following is a 207-amino-acid chain: Uridine kinase (207 aa).

Residue 14–21 (GGSGSGKT) participates in ATP binding.

Belongs to the uridine kinase family.

Its subcellular location is the cytoplasm. The enzyme catalyses uridine + ATP = UMP + ADP + H(+). It carries out the reaction cytidine + ATP = CMP + ADP + H(+). The protein operates within pyrimidine metabolism; CTP biosynthesis via salvage pathway; CTP from cytidine: step 1/3. It functions in the pathway pyrimidine metabolism; UMP biosynthesis via salvage pathway; UMP from uridine: step 1/1. This chain is Uridine kinase, found in Deinococcus deserti (strain DSM 17065 / CIP 109153 / LMG 22923 / VCD115).